Here is a 447-residue protein sequence, read N- to C-terminus: MTSVSPSPPASRSGSMCSDLPSSLQTEKLAHIIGLDADDEVLRRVTKQLSRSRRIACLTGAGISCNAGIPDFRSSDGLYDLVKKDCSQYWSIKSGREMFDISLFRDDFKISIFAKFMERLYSNVQLAKPTKTHKFIAHLKDRNKLLRCYTQNIDGLEESIGLTLSNRKLPLTSFSSHWKNLDVVQLHGDLKTLSCTKCFQTFPWSRYWSRCLRRGELPLCPDCEALINKRLNEGKRTLGSNVGILRPNIVLYGENHPSCEIITQGLNLDIIKGNPDFLIIMGTSLKVDGVKQLVKKLSKKIHDRGGLIILVNKTPIGESSWHGIIDYQIHSDCDNWVTFLESQIPDFFKTQDQIKKLRQLKREASDLRKQMKAQKDSIGTPPTTPLRTAQGIDIQGNNELNTKIKSLNTVKRKILSPENSSEEDEEENLDTRKRAKIRPTFGDNQAS.

Positions 1 to 21 (MTSVSPSPPASRSGSMCSDLP) are disordered. A Deacetylase sirtuin-type domain is found at 35 to 363 (LDADDEVLRR…IKKLRQLKRE (329 aa)). Residues 60-79 (GAGI…DGLY) and 151-154 (QNID) each bind NAD(+). H187 serves as the catalytic Proton acceptor. Positions 195, 198, 220, and 223 each coordinate Zn(2+). NAD(+)-binding positions include 282 to 284 (GTS), 312 to 314 (NKT), and C333. Residues 365 to 375 (SDLRKQMKAQK) show a composition bias toward basic and acidic residues. Disordered stretches follow at residues 365–393 (SDLR…QGID) and 411–447 (KRKI…NQAS).

The protein belongs to the sirtuin family. Class I subfamily. It depends on Zn(2+) as a cofactor.

The protein localises to the cytoplasm. Its subcellular location is the nucleus. The catalysed reaction is N(6)-acetyl-L-lysyl-[protein] + NAD(+) + H2O = 2''-O-acetyl-ADP-D-ribose + nicotinamide + L-lysyl-[protein]. NAD-dependent histone deacetylase, which contributes together with HST4 to histone H3 'Lys-56' deacetylation, regulation of telomeric silencing, proper cell cycle progression, DNA damage control, DNA recombination, and genomic maintenance. The chain is NAD-dependent histone deacetylase HST3 (HST3) from Saccharomyces cerevisiae (strain ATCC 204508 / S288c) (Baker's yeast).